Consider the following 494-residue polypeptide: Glucose-6-phosphate exchanger SLC37A2 (494 aa).

Residues 20 to 37 (YRFSILFLTFVFYTSYHL) form a helical membrane-spanning segment. N52, N63, and N67 each carry an N-linked (GlcNAc...) asparagine glycan. The next 11 helical transmembrane spans lie at 85–105 (FGVLDNCFLVAYAVGMFFSGI), 116–136 (LSTGMLLSGLFTALFGLGFYW), 146–166 (LVQALNGLVQTTGWPAVVACV), 187–207 (SVGNILGSLIAGVYVSSAWGL), 208–228 (SFIVPGIIIASTGVICFLFLV), 295–315 (LCLLFAKLVSYTFLYWLPLYI), 327–347 (GDLSTLFDVGGILGGIVAGLV), 355–375 (ASTCCAMLIIAAPMLFLYNKI), 384–404 (VGMLLWCGALVNGPYALITTA), 427–447 (AIIDGTGSIGAAVGPLLAGLI), and 455–475 (VFYMLIAADVLACLLLSRLVY).

Belongs to the major facilitator superfamily. Organophosphate:Pi antiporter (OPA) (TC 2.A.1.4) family.

Its subcellular location is the endoplasmic reticulum membrane. The enzyme catalyses D-glucose 6-phosphate(in) + phosphate(out) = D-glucose 6-phosphate(out) + phosphate(in). Its function is as follows. Inorganic phosphate and glucose-6-phosphate antiporter. May transport cytoplasmic glucose-6-phosphate into the lumen of the endoplasmic reticulum and translocate inorganic phosphate into the opposite direction. In Danio rerio (Zebrafish), this protein is Glucose-6-phosphate exchanger SLC37A2.